The sequence spans 838 residues: pre-rRNA 2'-O-ribose RNA methyltransferase FTSJ3 (838 aa).

Residues glycine 56, tryptophan 58, aspartate 76, aspartate 92, and aspartate 117 each contribute to the S-adenosyl-L-methionine site. Lysine 157 serves as the catalytic Proton acceptor. The interval 332 to 367 is disordered; the sequence is ISLSSEEEEEGDEEEAVAETKQAPEEEEEREEEQLN. Phosphoserine is present on residues serine 333, serine 335, and serine 336. The segment covering 336 to 348 has biased composition (acidic residues); that stretch reads SEEEEEGDEEEAV. The residue at position 390 (arginine 390) is a Citrulline. A disordered region spans residues 453–482; that stretch reads IYVSDAEDDDDTSLESDLDPEELAGVRTHS. The segment covering 457 to 474 has biased composition (acidic residues); sequence DAEDDDDTSLESDLDPEE. A phosphoserine mark is found at serine 532 and serine 545. Residues 537–639 form a disordered region; the sequence is DADEALEISQ…GRGSKADEDG (103 aa). Residue lysine 571 forms a Glycyl lysine isopeptide (Lys-Gly) (interchain with G-Cter in SUMO2) linkage. Serine 576 is subject to Phosphoserine. Glycyl lysine isopeptide (Lys-Gly) (interchain with G-Cter in SUMO2) cross-links involve residues lysine 634 and lysine 650. Serine 667 is modified (phosphoserine). Lysine 669 participates in a covalent cross-link: Glycyl lysine isopeptide (Lys-Gly) (interchain with G-Cter in SUMO2). Serine 679 is subject to Phosphoserine. A Glycyl lysine isopeptide (Lys-Gly) (interchain with G-Cter in SUMO2) cross-link involves residue lysine 701. Residues 730-768 are a coiled coil; that stretch reads IKKVAEAKARKKRRVLKKLEQTKKKAEAVVNTVDISERE. Citrulline is present on arginine 774. Over residues 802 to 812 the composition is skewed to basic residues; sequence VRRPAGVKGHF. The segment at 802-838 is disordered; sequence VRRPAGVKGHFKVVDSRMKKDQRAQQRKEQKKKHKRK. Positions 813–829 are enriched in basic and acidic residues; the sequence is KVVDSRMKKDQRAQQRK.

The protein belongs to the class I-like SAM-binding methyltransferase superfamily. RNA methyltransferase RlmE family. SPB1 subfamily. Interacts with NIP7. Citrullinated by PADI4.

The protein resides in the nucleus. Its subcellular location is the nucleolus. It catalyses the reaction a ribonucleotide in rRNA + S-adenosyl-L-methionine = a 2'-O-methylribonucleotide in rRNA + S-adenosyl-L-homocysteine + H(+). In terms of biological role, RNA 2'-O-methyltransferase involved in the processing of the 34S pre-rRNA to 18S rRNA and in 40S ribosomal subunit formation. The sequence is that of pre-rRNA 2'-O-ribose RNA methyltransferase FTSJ3 (Ftsj3) from Mus musculus (Mouse).